A 417-amino-acid chain; its full sequence is Equilibrative nucleotide transporter 2 (417 aa).

11 consecutive transmembrane segments (helical) span residues 20 to 40 (AVCW…LTIV), 52 to 72 (PSRI…SVLV), 85 to 105 (LFGY…NLAT), 109 to 129 (GGIG…LADA), 144 to 164 (PEFL…TSGL), 185 to 205 (LFFA…AYVF), 265 to 285 (LAVT…GFLS), 292 to 312 (SLGD…DLVG), 328 to 348 (CLLI…ITGI), 354 to 374 (WMIF…VCVI), and 393 to 413 (LVLY…LWLV).

The protein belongs to the SLC29A/ENT transporter (TC 2.A.57) family. As to expression, expressed in leaves and flowers.

It is found in the cell membrane. Its function is as follows. May be involved in nucleoside transport. This is Equilibrative nucleotide transporter 2 (ENT2) from Arabidopsis thaliana (Mouse-ear cress).